We begin with the raw amino-acid sequence, 274 residues long: TIP41-like protein (274 aa).

The protein belongs to the TIP41 family.

The chain is TIP41-like protein (tiprl) from Dictyostelium discoideum (Social amoeba).